Reading from the N-terminus, the 432-residue chain is Argininosuccinate lyase (432 aa).

This sequence belongs to the lyase 1 family. Argininosuccinate lyase subfamily.

It localises to the cytoplasm. The catalysed reaction is 2-(N(omega)-L-arginino)succinate = fumarate + L-arginine. It participates in amino-acid biosynthesis; L-arginine biosynthesis; L-arginine from L-ornithine and carbamoyl phosphate: step 3/3. This is Argininosuccinate lyase from Xanthomonas axonopodis pv. citri (strain 306).